The sequence spans 435 residues: E3 ubiquitin-protein ligase itt1 (435 aa).

An RWD domain is found at 16–135; the sequence is DELIALQSIY…EHVRSIATIA (120 aa). Positions 170–420 are TRIAD supradomain; the sequence is RKFQCNVCFD…DPVSSCYGML (251 aa). Residues C174, C177, C192, H194, C197, C200, C219, C224, C266, C271, C286, C289, C294, C297, H302, C308, C368, and C371 each coordinate Zn(2+). The segment at 174 to 224 adopts an RING-type 1 zinc-finger fold; that stretch reads CNVCFDEFNGTDCFQLTRCGHVSCQSCLRDYYTMCIQEGMFSQIKCIDLDC. An IBR-type zinc finger spans residues 245-308; the sequence is TNRYKELEEK…ATWHGDLSPC (64 aa). Residues 368–396 form an RING-type 2; atypical zinc finger; it reads CPTCDRVVERIDGCCHMNCLCGTHFCFLC. The active site involves C381. Residues C386, C388, C393, C396, H408, and C416 each contribute to the Zn(2+) site.

This sequence belongs to the RBR family. RNF14 subfamily.

The protein localises to the cytoplasm. It localises to the nucleus. The enzyme catalyses [E2 ubiquitin-conjugating enzyme]-S-ubiquitinyl-L-cysteine + [acceptor protein]-L-lysine = [E2 ubiquitin-conjugating enzyme]-L-cysteine + [acceptor protein]-N(6)-ubiquitinyl-L-lysine.. It participates in protein modification; protein ubiquitination. Functionally, E3 ubiquitin-protein ligase involved in the rescue of stalled ribosomes by promoting ubiquitination and degradation of proteins on stalled ribosomes. Specifically required to resolve RNA-protein cross-links caused by reactive aldehydes, which trigger translation stress by stalling ribosomes: acts by catalying 'Lys-6'-linked ubiquitination of RNA-protein cross-links, leading to their degradation. In Schizosaccharomyces pombe (strain 972 / ATCC 24843) (Fission yeast), this protein is E3 ubiquitin-protein ligase itt1 (itt1).